The primary structure comprises 144 residues: Actin-associated protein FAM107A (144 aa).

Positions 70–90 (VLEHRRRNQLIKKKEEELEAK) form a coiled coil. Residues 74–84 (RRRNQLIKKKE) carry the Nuclear localization signal motif. The tract at residues 104–123 (QQRLNQLENPPQRDEDHAPE) is disordered. Residues 114–123 (PQRDEDHAPE) are compositionally biased toward basic and acidic residues.

As to quaternary structure, interacts with ACTB. Interacts with F-actin. Interacts with PRDX1. Interacts with COMMD1; this interaction stabilizes COMMD1 in the nucleus. Interacts with MAP1A. Expressed in septum, the neocortex, the CA3 region of the hippocampus and the cerebellum (at protein level).

The protein resides in the nucleus. It is found in the cytoplasm. Its subcellular location is the cytoskeleton. It localises to the stress fiber. The protein localises to the cell junction. The protein resides in the focal adhesion. It is found in the cell projection. Its subcellular location is the ruffle membrane. It localises to the synapse. Functionally, stress-inducible actin-binding protein that plays a role in synaptic and cognitive functions by modulating actin filamentous (F-actin) dynamics. Mediates polymerization of globular actin to F-actin. Also binds to, stabilizes and bundles F-actin. Involved in synaptic function by regulating neurite outgrowth in an actin-dependent manner and for the acquisition of hippocampus-dependent cognitive function, such as learning and long-term memory. Plays a role in the actin and microtubule cytoskeleton organization; negatively regulates focal adhesion (FA) assembly promoting malignant glial cell migration in an actin-, microtubule- and MAP1A-dependent manner. Also involved in neuroblastoma G1/S phase cell cycle progression and cell proliferation inhibition by stimulating ubiquitination of NF-kappa-B subunit RELA and NF-kappa-B degradation in a COMMD1- and actin-dependent manner. May play a role in tumor development. This is Actin-associated protein FAM107A from Mus musculus (Mouse).